The primary structure comprises 97 residues: Large ribosomal subunit protein eL21 (97 aa).

The disordered stretch occupies residues 1 to 23 (MTKMSKGPRSGSRRVMTKSVKNK).

This sequence belongs to the eukaryotic ribosomal protein eL21 family.

This chain is Large ribosomal subunit protein eL21, found in Picrophilus torridus (strain ATCC 700027 / DSM 9790 / JCM 10055 / NBRC 100828 / KAW 2/3).